The primary structure comprises 390 residues: Imidazolonepropionase (390 aa).

Histidine 71 and histidine 73 together coordinate Fe(3+). 2 residues coordinate Zn(2+): histidine 71 and histidine 73. 4-imidazolone-5-propanoate-binding residues include arginine 80, tyrosine 138, and histidine 165. Tyrosine 138 is an N-formimidoyl-L-glutamate binding site. Histidine 228 serves as a coordination point for Fe(3+). Residue histidine 228 coordinates Zn(2+). Residue glutamine 231 coordinates 4-imidazolone-5-propanoate. Fe(3+) is bound at residue aspartate 302. Aspartate 302 is a binding site for Zn(2+). N-formimidoyl-L-glutamate contacts are provided by asparagine 304 and glycine 306. Residue serine 307 coordinates 4-imidazolone-5-propanoate.

It belongs to the metallo-dependent hydrolases superfamily. HutI family. It depends on Zn(2+) as a cofactor. The cofactor is Fe(3+).

The protein resides in the cytoplasm. It carries out the reaction 4-imidazolone-5-propanoate + H2O = N-formimidoyl-L-glutamate. It functions in the pathway amino-acid degradation; L-histidine degradation into L-glutamate; N-formimidoyl-L-glutamate from L-histidine: step 3/3. Functionally, catalyzes the hydrolytic cleavage of the carbon-nitrogen bond in imidazolone-5-propanoate to yield N-formimidoyl-L-glutamate. It is the third step in the universal histidine degradation pathway. The protein is Imidazolonepropionase of Streptomyces griseus subsp. griseus (strain JCM 4626 / CBS 651.72 / NBRC 13350 / KCC S-0626 / ISP 5235).